Consider the following 194-residue polypeptide: Small ribosomal subunit protein uS7 (194 aa).

Belongs to the universal ribosomal protein uS7 family. As to quaternary structure, part of the 30S ribosomal subunit.

Its function is as follows. One of the primary rRNA binding proteins, it binds directly to 16S rRNA where it nucleates assembly of the head domain of the 30S subunit. Is located at the subunit interface close to the decoding center. This is Small ribosomal subunit protein uS7 from Methanocorpusculum labreanum (strain ATCC 43576 / DSM 4855 / Z).